A 445-amino-acid chain; its full sequence is mRNA cleavage and polyadenylation factor CLP1 (445 aa).

ATP-binding positions include Asp33, Lys72, and 133–138 (QTGKTS).

Belongs to the Clp1 family. Clp1 subfamily. In terms of assembly, component of the cleavage factor IA (CF IA) complex, which is a heterohexameric complex with 2:2:1:1 stoichiometry of RNA14, RNA15, PCF11 and CLP1. It contains 2 copies of an RNA14-RNA15 dimer and 1 copy of CLP1-PCF11. The complex interacts with the cleavage factor HRB1/CF IB to form the cleavage factor I (CF I) complex, and binds to RNA. Interacts directly with PCF11. Interacts with the CPF components CFT1, PTA1, PFS2, YSH1 and SSU72.

Its subcellular location is the nucleus. Component of the cleavage factor IA (CF IA) complex, which is involved in the endonucleolytic cleavage during polyadenylation-dependent pre-mRNA 3'-end formation. Associates with HRB1/CF IB to form the cleavage factor I (CF I) complex. CF I is required for correct positioning of a larger protein complex, the cleavage and polyadenylation factor (CPF) complex, which contains the catalytic subunits executing mRNA cleavage and polyadenylation. CLP1 mediates interactions between CF IA and CPF factors. CLP1 is also involved in maintaining the CF IA interaction with the C-terminal domain of RNA Pol II largest subunit via PCF11, which links pre-mRNA 3'-end processing to transcription termination. This is mRNA cleavage and polyadenylation factor CLP1 from Saccharomyces cerevisiae (strain YJM789) (Baker's yeast).